We begin with the raw amino-acid sequence, 162 residues long: Interleukin-15 (162 aa).

The signal sequence occupies residues Met-1–Ala-29. A propeptide spanning residues Gly-30–Ala-48 is cleaved from the precursor. Intrachain disulfides connect Cys-83–Cys-133 and Cys-90–Cys-136. Asn-113, Asn-121, and Asn-127 each carry an N-linked (GlcNAc...) asparagine glycan.

The protein belongs to the IL-15/IL-21 family.

The protein resides in the secreted. In terms of biological role, cytokine that plays a major role in the development of inflammatory and protective immune responses to microbial invaders and parasites by modulating immune cells of both the innate and adaptive immune systems. Stimulates the proliferation of natural killer cells, T-cells and B-cells and promotes the secretion of several cytokines. In monocytes, induces the production of IL8 and monocyte chemotactic protein 1/CCL2, two chemokines that attract neutrophils and monocytes respectively to sites of infection. Unlike most cytokines, which are secreted in soluble form, IL15 is expressed in association with its high affinity IL15RA on the surface of IL15-producing cells and delivers signals to target cells that express IL2RB and IL2RG receptor subunits. Binding to its receptor triggers the phosphorylation of JAK1 and JAK3 and the recruitment and subsequent phosphorylation of signal transducer and activator of transcription-3/STAT3 and STAT5. In mast cells, induces the rapid tyrosine phosphorylation of STAT6 and thereby controls mast cell survival and release of cytokines such as IL4. The chain is Interleukin-15 (IL15) from Ovis aries (Sheep).